The chain runs to 422 residues: Putative serpin-Z8 (422 aa).

The segment at 369-393 (GTVAAAATMTRMLPSGVPPPPVDFV) is RCL.

The protein belongs to the serpin family.

In terms of biological role, probable serine protease inhibitor. The protein is Putative serpin-Z8 of Oryza sativa subsp. japonica (Rice).